Here is a 132-residue protein sequence, read N- to C-terminus: Interleukin-5 (132 aa).

Positions 1 to 19 are cleaved as a signal peptide; that stretch reads MRMLLHLSILTLACVWTFA. N-linked (GlcNAc...) asparagine glycosylation is found at Asn-45, Asn-74, and Asn-88.

Belongs to the IL-5 family. Homodimer; disulfide-linked. Interacts with IL5RA. Interacts with CSF2RB.

It localises to the secreted. In terms of biological role, homodimeric cytokine expressed predominantly by T-lymphocytes and NK cells that plays an important role in the survival, differentiation, and chemotaxis of eosinophils. Also acts on activated and resting B-cells to induce immunoglobulin production, growth, and differentiation. Mechanistically, exerts its biological effects through a receptor composed of IL5RA subunit and the cytokine receptor common subunit beta/CSF2RB. Binding to the receptor leads to activation of various kinases including LYN, SYK and JAK2 and thereby propagates signals through the RAS-MAPK and JAK-STAT5 pathways respectively. This Sigmodon hispidus (Hispid cotton rat) protein is Interleukin-5 (IL5).